Here is a 205-residue protein sequence, read N- to C-terminus: Large ribosomal subunit protein uL18 (205 aa).

Belongs to the universal ribosomal protein uL18 family. As to quaternary structure, part of the 50S ribosomal subunit. Contacts the 5S and 23S rRNAs.

Functionally, this is one of the proteins that bind and probably mediate the attachment of the 5S RNA into the large ribosomal subunit, where it forms part of the central protuberance. This Haloquadratum walsbyi (strain DSM 16790 / HBSQ001) protein is Large ribosomal subunit protein uL18.